The chain runs to 32 residues: Snake venom serine proteinase (32 aa).

The 32-residue stretch at Val-1–Asn-32 folds into the Peptidase S1 domain.

It belongs to the peptidase S1 family. Snake venom subfamily. In terms of assembly, monomer. In terms of processing, contains 6 disulfide bonds. Glycosylated. As to expression, expressed by the venom gland.

The protein localises to the secreted. Functionally, cleaves a kininogen analog with the release of kallidin (lysyl-bradykinin). Completely cleaves fibrinogen Aalpha chain, partially cleaves Bbeta chain and has no activity on gamma chain. In Bitis arietans (African puff adder), this protein is Snake venom serine proteinase.